Consider the following 132-residue polypeptide: Small ribosomal subunit protein uS8 (132 aa).

Belongs to the universal ribosomal protein uS8 family. In terms of assembly, part of the 30S ribosomal subunit. Contacts proteins S5 and S12.

Functionally, one of the primary rRNA binding proteins, it binds directly to 16S rRNA central domain where it helps coordinate assembly of the platform of the 30S subunit. This Aliarcobacter butzleri (strain RM4018) (Arcobacter butzleri) protein is Small ribosomal subunit protein uS8.